Consider the following 165-residue polypeptide: Chorismate pyruvate-lyase (165 aa).

Residues M35, R77, L115, and E156 each coordinate substrate.

The protein belongs to the UbiC family. In terms of assembly, monomer.

The protein resides in the cytoplasm. It catalyses the reaction chorismate = 4-hydroxybenzoate + pyruvate. It participates in cofactor biosynthesis; ubiquinone biosynthesis. Removes the pyruvyl group from chorismate, with concomitant aromatization of the ring, to provide 4-hydroxybenzoate (4HB) for the ubiquinone pathway. The chain is Chorismate pyruvate-lyase from Escherichia coli (strain K12 / MC4100 / BW2952).